The primary structure comprises 398 residues: Ornithine aminotransferase (398 aa).

Lysine 256 is modified (N6-(pyridoxal phosphate)lysine).

This sequence belongs to the class-III pyridoxal-phosphate-dependent aminotransferase family. OAT subfamily. Requires pyridoxal 5'-phosphate as cofactor.

The protein resides in the cytoplasm. The catalysed reaction is a 2-oxocarboxylate + L-ornithine = L-glutamate 5-semialdehyde + an L-alpha-amino acid. It functions in the pathway amino-acid biosynthesis; L-proline biosynthesis; L-glutamate 5-semialdehyde from L-ornithine: step 1/1. In terms of biological role, catalyzes the interconversion of ornithine to glutamate semialdehyde. This Halalkalibacterium halodurans (strain ATCC BAA-125 / DSM 18197 / FERM 7344 / JCM 9153 / C-125) (Bacillus halodurans) protein is Ornithine aminotransferase.